Consider the following 464-residue polypeptide: RYamide receptor (464 aa).

Topologically, residues 1 to 105 (MEHHNSHLLP…EDMWSSAYFK (105 aa)) are extracellular. N-linked (GlcNAc...) asparagine glycosylation is found at asparagine 49, asparagine 79, and asparagine 85. The chain crosses the membrane as a helical span at residues 106 to 126 (IIVYMLYIPIFIFALIGNGTV). The Cytoplasmic segment spans residues 127–148 (CYIVYSTPRMRTVTNYFIASLA). A helical transmembrane segment spans residues 149-169 (IGDILMSFFCVPSSFISLFIL). Residues 170 to 189 (NYWPFGLALCHFVNYSQAVS) lie on the Extracellular side of the membrane. Asparagine 183 carries N-linked (GlcNAc...) asparagine glycosylation. The helical transmembrane segment at 190–210 (VLVSAYTLVAISIDRYIAIMW) threads the bilayer. At 211 to 221 (PLKPRITKRYA) the chain is on the cytoplasmic side. A helical transmembrane segment spans residues 222-242 (TFIIAGVWFIALATALPIPIV). The Extracellular segment spans residues 243–274 (SGLDIPMSPWHTKCEKYICREMWPSRTQEYYY). A helical membrane pass occupies residues 275 to 295 (TLSLFALQFVVPLGVLIFTYA). The Cytoplasmic segment spans residues 296–329 (RITIRVWAKRPPGEAETNRDQRMARSKRKMVKMM). The helical transmembrane segment at 330–350 (LTVVIVFTCCWLPFNILQLLL) threads the bilayer. Topologically, residues 351-363 (NDEEFAHWDPLPY) are extracellular. The chain crosses the membrane as a helical span at residues 364 to 384 (VWFAFHWLAMSHCCYNPIIYC). The Cytoplasmic portion of the chain corresponds to 385-464 (YMNARFRSGF…LSCGETSPLR (80 aa)).

This sequence belongs to the G-protein coupled receptor 1 family.

The protein localises to the cell membrane. Its function is as follows. Receptor for the neuropeptides RYamide-1 and RYamide-2. The activity of this receptor is mediated by G proteins which activate a phosphatidyl-inositol-calcium second messenger system. RYamide signaling may suppress feeding behavior. This chain is RYamide receptor, found in Drosophila melanogaster (Fruit fly).